Reading from the N-terminus, the 147-residue chain is Acidic phospholipase A2 beta-bungarotoxin A4 chain (147 aa).

An N-terminal signal peptide occupies residues 1-19 (MNPAHLLVLSAVCVSLLGA). Residues 20–27 (ANIPPQHL) constitute a propeptide that is removed on maturation. 6 disulfides stabilise this stretch: cysteine 54-cysteine 146, cysteine 56-cysteine 72, cysteine 71-cysteine 127, cysteine 78-cysteine 120, cysteine 88-cysteine 113, and cysteine 106-cysteine 118. Ca(2+) is bound by residues tyrosine 55, glycine 57, and glycine 59. Histidine 75 is an active-site residue. Ca(2+) is bound at residue aspartate 76. Residue aspartate 121 is part of the active site.

This sequence belongs to the phospholipase A2 family. Group I subfamily. D49 sub-subfamily. Heterodimer; disulfide-linked. The A chains have phospholipase A2 activity and the B chains show homology with the basic protease inhibitors. It depends on Ca(2+) as a cofactor. Expressed by the venom gland.

The protein resides in the secreted. It catalyses the reaction a 1,2-diacyl-sn-glycero-3-phosphocholine + H2O = a 1-acyl-sn-glycero-3-phosphocholine + a fatty acid + H(+). In terms of biological role, snake venom phospholipase A2 (PLA2) that inhibits neuromuscular transmission by blocking acetylcholine release from the nerve termini. PLA2 catalyzes the calcium-dependent hydrolysis of the 2-acyl groups in 3-sn-phosphoglycerides. The sequence is that of Acidic phospholipase A2 beta-bungarotoxin A4 chain from Bungarus multicinctus (Many-banded krait).